The sequence spans 301 residues: uncharacterized protein (301 aa).

The 59-residue stretch at 27–85 (YKIGRHTNKSTSPSPSNLFFNSKVLSRQHAELWLDKDTLSVYIRDVKSSNGTFVNETRL) folds into the FHA domain. Residues 187–236 (TGKTRDNRNNHHYSRKSSPHISSLAVPSTKHLDGERDRNLKRSTSPLSSS) form a disordered region. Serine 204 bears the Phosphoserine mark. The segment covering 216 to 226 (KHLDGERDRNL) has biased composition (basic and acidic residues). A Phosphoserine modification is found at serine 231.

Interacts with sad1.

It localises to the nucleus. This is an uncharacterized protein from Schizosaccharomyces pombe (strain 972 / ATCC 24843) (Fission yeast).